A 275-amino-acid polypeptide reads, in one-letter code: UPF0328 protein ECU05_0050 (275 aa).

Belongs to the UPF0328 family.

The sequence is that of UPF0328 protein ECU05_0050 from Encephalitozoon cuniculi (strain GB-M1) (Microsporidian parasite).